The primary structure comprises 236 residues: Biosynthetic peptidoglycan transglycosylase (236 aa).

Residues 12–31 traverse the membrane as a helical segment; that stretch reads ALFWFAAGSIVLVLVFRWVP.

This sequence belongs to the glycosyltransferase 51 family.

The protein localises to the cell inner membrane. The enzyme catalyses [GlcNAc-(1-&gt;4)-Mur2Ac(oyl-L-Ala-gamma-D-Glu-L-Lys-D-Ala-D-Ala)](n)-di-trans,octa-cis-undecaprenyl diphosphate + beta-D-GlcNAc-(1-&gt;4)-Mur2Ac(oyl-L-Ala-gamma-D-Glu-L-Lys-D-Ala-D-Ala)-di-trans,octa-cis-undecaprenyl diphosphate = [GlcNAc-(1-&gt;4)-Mur2Ac(oyl-L-Ala-gamma-D-Glu-L-Lys-D-Ala-D-Ala)](n+1)-di-trans,octa-cis-undecaprenyl diphosphate + di-trans,octa-cis-undecaprenyl diphosphate + H(+). The protein operates within cell wall biogenesis; peptidoglycan biosynthesis. Peptidoglycan polymerase that catalyzes glycan chain elongation from lipid-linked precursors. The sequence is that of Biosynthetic peptidoglycan transglycosylase from Pseudomonas putida (strain W619).